A 302-amino-acid chain; its full sequence is Elongation factor Ts (302 aa).

Residues 80-83 (TDFV) form an involved in Mg(2+) ion dislocation from EF-Tu region.

The protein belongs to the EF-Ts family.

The protein resides in the cytoplasm. Functionally, associates with the EF-Tu.GDP complex and induces the exchange of GDP to GTP. It remains bound to the aminoacyl-tRNA.EF-Tu.GTP complex up to the GTP hydrolysis stage on the ribosome. This is Elongation factor Ts from Gluconobacter oxydans (strain 621H) (Gluconobacter suboxydans).